The following is a 1342-amino-acid chain: MVYSYSEKKRIRKDFGKRPQVLEIPYLLSIQLDSFKKFIDLDVDGQHGLEAAFRSVFPIKSYSGNAELQYVSYRLGEPVFDVKECQIRGVTFSAPLRVKLRLVLFDREAAPGTVKDIKEQEVYMGEIPLMTENGTFVINGTERVIVSQLHRSPGVFFDHDKGKTHSSGKVLYNARVIPYRGSWLDFEFDPKDNLYVRIDRRRKLPATIMLRALEIPTEEILGMFFEKNQVRIDGNRFMSDIVPDRLRGETAQFDILDSDGNVLVEAGRRISARHTRALEKAGIVELEVPAEYLVGRVFACDYVDQETGELVVAANDLLTLENVLALKEAGYTTFETLYINELDHGAYISDTLRIDSSTNRLEALVEIYRMMRPGEPPTKDAAETLFTNLFFSEDRYDLSSVGRMKFNRRLGRETSIGAGTLDKDDIVDVMKQLITIRDGKDDVDDIDHLGNRRIRSVGEMAENQFRVGLVRVERAVKERLSLGDLDAVMPQDLINAKPISAAVKEFFGSSQLSQFMDQNNPLSEVTDKRRISALGPGGLTRERAGFEVRDVHPTHYGRVCPIETPEGPNIGLINSLASFARTNDFGFLETPYRKIVDGVVTDEIDYLSAIEEGQFSIAQANVVLDETGRLADDLIPCRHRGETTLKESSEITYMDVSPQQIVSIAASIIPFLEHDDANRALMGANMQRQAVPTLIADKPLVGTGMEKTVAVDSGVTVVAKRGGRVDYVDASRIVIKVNEEETVAGEAGIDIYNLTKYTRSNQNTCINQRPTCNVGEPIVAGDVLADGPSTDLGELALGQNMRIAFMPWNGYNFEDSILISERVAMEDRFTTIHIQELSCVARDTKLGPEEISSDIPNVGESALGKLDESGVVYIGAEVKGGDILVGKVTPKGETQLTPEEKLLRAIFGEKASDVKDTSLRVPNSVRGTVIDVQVFTRDGVEKDKRALEIEGMQLRQVKKDLSDEFNILADGIFARAKNLLIKSGIEESRLESAQREKWFDLTLTDEDAQTELDQIAEQFVEIKADFDKKFEIKRRKITQGDDLQPGVLKIVKVYLAVKRQIQPGDKMAGRHGNKGVISTIKPVEDMPYDVNGTPVDIVLNPLGVPSRMNIGQILETHLGMAAHGIGVKIDRMLKEHEEMAKLRSFLKEVYGAGTTHQEVDLDNFSDDEITRLADNLRKGVPMATPVFDGATEAEIKHMLTLADLPESGQIALFDGRTGREFERPVTVGYMYMLKLNHLVDDKMHARSTGSYSLVTQQPLGGKAQFGGQRFGEMEVWALEAYGAAYTLQEMLTVKSDDVNGRTKMYKNIVDGDHRMEPGMPESFNVLLKEIRSLGINIELEEQ.

This sequence belongs to the RNA polymerase beta chain family. As to quaternary structure, the RNAP catalytic core consists of 2 alpha, 1 beta, 1 beta' and 1 omega subunit. When a sigma factor is associated with the core the holoenzyme is formed, which can initiate transcription.

It catalyses the reaction RNA(n) + a ribonucleoside 5'-triphosphate = RNA(n+1) + diphosphate. Functionally, DNA-dependent RNA polymerase catalyzes the transcription of DNA into RNA using the four ribonucleoside triphosphates as substrates. This is DNA-directed RNA polymerase subunit beta from Pseudoalteromonas atlantica (strain T6c / ATCC BAA-1087).